The primary structure comprises 521 residues: Probable cytosol aminopeptidase (521 aa).

K268 and D273 together coordinate Mn(2+). The active site involves K280. Residues D291, D350, and E352 each coordinate Mn(2+). The active site involves R354.

It belongs to the peptidase M17 family. Mn(2+) serves as cofactor.

The protein resides in the cytoplasm. It catalyses the reaction Release of an N-terminal amino acid, Xaa-|-Yaa-, in which Xaa is preferably Leu, but may be other amino acids including Pro although not Arg or Lys, and Yaa may be Pro. Amino acid amides and methyl esters are also readily hydrolyzed, but rates on arylamides are exceedingly low.. It carries out the reaction Release of an N-terminal amino acid, preferentially leucine, but not glutamic or aspartic acids.. Functionally, presumably involved in the processing and regular turnover of intracellular proteins. Catalyzes the removal of unsubstituted N-terminal amino acids from various peptides. The chain is Probable cytosol aminopeptidase from Chromobacterium violaceum (strain ATCC 12472 / DSM 30191 / JCM 1249 / CCUG 213 / NBRC 12614 / NCIMB 9131 / NCTC 9757 / MK).